The sequence spans 145 residues: D-aminoacyl-tRNA deacylase (145 aa).

Residues 137-138 carry the Gly-cisPro motif, important for rejection of L-amino acids motif; it reads GP.

The protein belongs to the DTD family. As to quaternary structure, homodimer.

The protein localises to the cytoplasm. It catalyses the reaction glycyl-tRNA(Ala) + H2O = tRNA(Ala) + glycine + H(+). It carries out the reaction a D-aminoacyl-tRNA + H2O = a tRNA + a D-alpha-amino acid + H(+). In terms of biological role, an aminoacyl-tRNA editing enzyme that deacylates mischarged D-aminoacyl-tRNAs. Also deacylates mischarged glycyl-tRNA(Ala), protecting cells against glycine mischarging by AlaRS. Acts via tRNA-based rather than protein-based catalysis; rejects L-amino acids rather than detecting D-amino acids in the active site. By recycling D-aminoacyl-tRNA to D-amino acids and free tRNA molecules, this enzyme counteracts the toxicity associated with the formation of D-aminoacyl-tRNA entities in vivo and helps enforce protein L-homochirality. In Limosilactobacillus reuteri (strain DSM 20016) (Lactobacillus reuteri), this protein is D-aminoacyl-tRNA deacylase.